The sequence spans 161 residues: Ribonuclease H (161 aa).

The 142-residue stretch at 3 to 144 (VLKQLSIFTD…CDTLARVAAE (142 aa)) folds into the RNase H type-1 domain. Residues Asp12, Glu50, Asp72, and Asp136 each coordinate Mg(2+).

It belongs to the RNase H family. Monomer. Requires Mg(2+) as cofactor.

It localises to the cytoplasm. The enzyme catalyses Endonucleolytic cleavage to 5'-phosphomonoester.. Functionally, endonuclease that specifically degrades the RNA of RNA-DNA hybrids. The polypeptide is Ribonuclease H (Shewanella woodyi (strain ATCC 51908 / MS32)).